The following is a 529-amino-acid chain: MLPKKPIFSSTEQHRFDETRWVINVQKSLDAELEEHDLEEVTVSIFNVPKALMCSHPDSYTPHRVSIGPYHCLKPELHEMERYKLMIARKIRNQYNSFRFHDLVEKLQSMEIKIRACYHKYIGFNGETLLWIMAVDSSFLIEFLKIYSFRKVETLINRVGHNEILRDIMMIENQIPLFVLRKTLEFQLESTESADDLLLSVLTGLCKDLSPLVIKFDDDQILKAQFQECNHILDFLYQMIVPRIEEEELEEDDEENRADENGGNRAIRFMDEIKHQFKRVFASRPADLILRFPWRIISNLPGFMALKLSADYLFTRQENEATTTRQESVSILDIEKPPLVEELTIPSVSDLHKAGVRFKPTAHGNISTVTFDSNSGQFYLPVINLDINTETVLRNLVAYEATNTSGPLVFTRYTELINGIIDSEEDVRLLREQGVLVSRLKSDQEAAEMWNGMSKSVRLTKVGFLDKTIEDVNRYYTGRWKVKIGRLVEVYVYGSWQILAFLAAVLLLMLVSLQLFSLVFSSFLRFRAG.

Residues Asn365 and Asn403 are each glycosylated (N-linked (GlcNAc...) asparagine). Residues Ile498–Leu518 form a helical membrane-spanning segment.

The protein belongs to the UPF0481 family.

It is found in the membrane. The protein is Putative UPF0481 protein At3g02645 of Arabidopsis thaliana (Mouse-ear cress).